The following is a 1057-amino-acid chain: Atrial natriuretic peptide receptor 1 (1057 aa).

The signal sequence occupies residues 1–28; the sequence is MPGSRRVRPRLRALLLLPPLLLLRSGHA. Over 29–469 the chain is Extracellular; sequence SDLTVAVVLP…CNQDHFSTLE (441 aa). Asparagine 41 carries an N-linked (GlcNAc...) asparagine glycan. Serine 81, glycine 113, and cysteine 114 together coordinate chloride. 2 disulfide bridges follow: cysteine 88–cysteine 114 and cysteine 192–cysteine 241. 5 N-linked (GlcNAc...) asparagine glycosylation sites follow: asparagine 208, asparagine 334, asparagine 375, asparagine 382, and asparagine 423. Cysteine 451 and cysteine 460 are joined by a disulfide. A helical transmembrane segment spans residues 470–490; it reads VLALVGSLSLVSFLIVSFFIY. Residues 491 to 1057 are Cytoplasmic-facing; that stretch reads RKMQLEKELV…LGERGCSTRG (567 aa). Residues serine 515 and serine 525 each carry the phosphoserine modification. The Protein kinase domain maps to 524–801; the sequence is GSRLTLSGRG…QIRLALRKFN (278 aa). Threonine 528 is subject to Phosphothreonine. A phosphoserine mark is found at serine 530, serine 534, and serine 538. Phosphothreonine is present on threonine 541. In terms of domain architecture, Guanylate cyclase spans 872–1002; the sequence is TIYFSDIVGF…DTVNTASRME (131 aa).

Belongs to the adenylyl cyclase class-4/guanylyl cyclase family. In terms of assembly, homodimer. Post-translationally, phosphorylation of the protein kinase-like domain is required for full activation by ANP.

It is found in the membrane. It catalyses the reaction GTP = 3',5'-cyclic GMP + diphosphate. In terms of biological role, receptor for the atrial natriuretic peptide NPPA/ANP and the brain natriuretic peptide NPPB/BNP which are potent vasoactive hormones playing a key role in cardiovascular homeostasis. Plays an essential role in the regulation of endothelial cell senescence and vascular aging. Upon activation by ANP or BNP, stimulates the production of cyclic guanosine monophosphate (cGMP) that promotes vascular tone and volume homeostasis by activation of protein kinase cGMP-dependent 1/PRKG1 and subsequently PRKAA1, thereby controlling blood pressure and maintaining cardiovascular homeostasis. The sequence is that of Atrial natriuretic peptide receptor 1 (Npr1) from Mus musculus (Mouse).